Reading from the N-terminus, the 382-residue chain is S-adenosylmethionine synthase (382 aa).

ATP is bound at residue H14. D16 is a binding site for Mg(2+). E42 lines the K(+) pocket. Residues E55 and Q91 each contribute to the L-methionine site. The flexible loop stretch occupies residues 91 to 101 (QSENIAMGVNL). ATP contacts are provided by residues 156 to 158 (DMK), 222 to 223 (KF), D231, 237 to 238 (RK), A254, and K258. D231 contributes to the L-methionine binding site. K262 provides a ligand contact to L-methionine.

Belongs to the AdoMet synthase family. As to quaternary structure, homotetramer; dimer of dimers. The cofactor is Mg(2+). Requires K(+) as cofactor.

Its subcellular location is the cytoplasm. The enzyme catalyses L-methionine + ATP + H2O = S-adenosyl-L-methionine + phosphate + diphosphate. Its pathway is amino-acid biosynthesis; S-adenosyl-L-methionine biosynthesis; S-adenosyl-L-methionine from L-methionine: step 1/1. Functionally, catalyzes the formation of S-adenosylmethionine (AdoMet) from methionine and ATP. The overall synthetic reaction is composed of two sequential steps, AdoMet formation and the subsequent tripolyphosphate hydrolysis which occurs prior to release of AdoMet from the enzyme. The polypeptide is S-adenosylmethionine synthase (Mycoplasmopsis synoviae (strain 53) (Mycoplasma synoviae)).